A 384-amino-acid polypeptide reads, in one-letter code: Putative ankyrin repeat protein L72 (384 aa).

7 ANK repeats span residues 88–117, 119–146, 171–200, 202–231, 233–261, 298–324, and 325–357; these read ADMCIIGDIMNFYDINTIRYLIDNGANIKN, GNLLCQASQLGCIDIVKLLVKTSEKEFS, DHNVCILIAIVYKHIDVVKYFISIGEILSV, DDSLYFKLACDTGCLNIIKYLLEIGFDIES, NNYCLMISTINGRNDIVEYIKSRGVNPNN, ILYQLLLIACEYGYYSMTMYLIKAGIK, and PTNSCLKIACKNNKFNIVKLITKYPKTRLDINV.

In Acanthamoeba polyphaga (Amoeba), this protein is Putative ankyrin repeat protein L72.